The primary structure comprises 217 residues: Salivary glue protein Sgs-3 (217 aa).

An N-terminal signal peptide occupies residues 1-23; that stretch reads MKLTIATVLASILLIGFANVANC. The segment covering 45–130 has biased composition (low complexity); it reads KSTSTTTTTT…KPTTHSTPKT (86 aa). The tract at residues 45 to 163 is disordered; the sequence is KSTSTTTTTT…KHTTPTTTTT (119 aa). Positions 131 to 154 are enriched in basic residues; the sequence is KPTKHTTPKTKPTKHTTPKTKPTK.

The polypeptide is Salivary glue protein Sgs-3 (Sgs3) (Drosophila simulans (Fruit fly)).